The sequence spans 129 residues: Glycine cleavage system H protein (129 aa).

The Lipoyl-binding domain occupies 24–106 (EAVVGITEHA…YGAGWLFRIK (83 aa)). N6-lipoyllysine is present on lysine 65.

It belongs to the GcvH family. The glycine cleavage system is composed of four proteins: P, T, L and H. It depends on (R)-lipoate as a cofactor.

Functionally, the glycine cleavage system catalyzes the degradation of glycine. The H protein shuttles the methylamine group of glycine from the P protein to the T protein. The chain is Glycine cleavage system H protein from Aeromonas hydrophila subsp. hydrophila (strain ATCC 7966 / DSM 30187 / BCRC 13018 / CCUG 14551 / JCM 1027 / KCTC 2358 / NCIMB 9240 / NCTC 8049).